Consider the following 271-residue polypeptide: 2-dehydro-3-deoxyphosphooctonate aldolase (271 aa).

This sequence belongs to the KdsA family.

It localises to the cytoplasm. It catalyses the reaction D-arabinose 5-phosphate + phosphoenolpyruvate + H2O = 3-deoxy-alpha-D-manno-2-octulosonate-8-phosphate + phosphate. Its pathway is carbohydrate biosynthesis; 3-deoxy-D-manno-octulosonate biosynthesis; 3-deoxy-D-manno-octulosonate from D-ribulose 5-phosphate: step 2/3. The protein operates within bacterial outer membrane biogenesis; lipopolysaccharide biosynthesis. This chain is 2-dehydro-3-deoxyphosphooctonate aldolase, found in Campylobacter jejuni subsp. jejuni serotype O:2 (strain ATCC 700819 / NCTC 11168).